The primary structure comprises 355 residues: Polyferredoxin protein FwdF (355 aa).

8 consecutive 4Fe-4S ferredoxin-type domains span residues 24 to 53 (RELC…MGPL), 64 to 93 (PKLD…LKIN), 108 to 137 (RDIK…VERE), 147 to 176 (GEIN…LKYN), 187 to 216 (TDIE…VICY), 235 to 264 (GKTV…VEKP), 267 to 296 (GELI…FPKP), and 304 to 333 (PRII…VKRT). C33, C36, C39, C43, C73, C76, C79, C83, C117, C120, C123, C127, C156, C159, C162, C166, C196, C199, C202, C206, C244, C247, C250, C254, C276, C279, C282, C286, C313, C316, C319, and C323 together coordinate [4Fe-4S] cluster.

The cofactor is [4Fe-4S] cluster.

The protein is Polyferredoxin protein FwdF (fwdF) of Methanocaldococcus jannaschii (strain ATCC 43067 / DSM 2661 / JAL-1 / JCM 10045 / NBRC 100440) (Methanococcus jannaschii).